Reading from the N-terminus, the 211-residue chain is PITH domain-containing protein 1 (211 aa).

Residues Glu-20–Ser-192 form the PITH domain. Tyr-189 bears the Phosphotyrosine mark.

It belongs to the PITHD1 family. As to expression, down-regulated in primary acute myeloid leukemia (AML) patients.

The protein resides in the cytoplasm. Functionally, promotes megakaryocyte differentiation by up-regulating RUNX1 expression. Regulates RUNX1 expression by activating the proximal promoter of the RUNX1 gene and by enhancing the translation activity of an internal ribosome entry site (IRES) element in the RUNX1 gene. The protein is PITH domain-containing protein 1 (PITHD1) of Homo sapiens (Human).